Reading from the N-terminus, the 70-residue chain is Cold shock-like protein CspI (70 aa).

Positions 7–67 constitute a CSD domain; it reads GLVKWFNPEK…GPKGPAAVHV (61 aa).

Its subcellular location is the cytoplasm. The polypeptide is Cold shock-like protein CspI (cspI) (Escherichia coli O6:H1 (strain CFT073 / ATCC 700928 / UPEC)).